We begin with the raw amino-acid sequence, 140 residues long: Fluoride-specific ion channel FluC 1 (140 aa).

4 consecutive transmembrane segments (helical) span residues 4-24 (LYLA…ASFI), 32-52 (FPLA…FILT), 70-90 (TGML…LHLL), and 99-119 (LLYL…GIFL). 2 residues coordinate Na(+): Gly74 and Thr77.

This sequence belongs to the fluoride channel Fluc/FEX (TC 1.A.43) family.

It localises to the cell membrane. It carries out the reaction fluoride(in) = fluoride(out). Its activity is regulated as follows. Na(+) is not transported, but it plays an essential structural role and its presence is essential for fluoride channel function. Functionally, fluoride-specific ion channel. Important for reducing fluoride concentration in the cell, thus reducing its toxicity. The polypeptide is Fluoride-specific ion channel FluC 1 (Moorella thermoacetica (strain ATCC 39073 / JCM 9320)).